A 20-amino-acid chain; its full sequence is Phospholipase A2 D5 (20 aa).

It depends on Ca(2+) as a cofactor. Post-translationally, contains seven disulfide bonds. Expressed by the venom gland.

It localises to the secreted. The catalysed reaction is a 1,2-diacyl-sn-glycero-3-phosphocholine + H2O = a 1-acyl-sn-glycero-3-phosphocholine + a fatty acid + H(+). In terms of biological role, PLA2 catalyzes the calcium-dependent hydrolysis of the 2-acyl groups in 3-sn-phosphoglycerides. The protein is Phospholipase A2 D5 of Micrurus pyrrhocryptus (Coral snake).